The chain runs to 249 residues: tRNA pseudouridine synthase A (249 aa).

Asp-53 (nucleophile) is an active-site residue. Tyr-111 serves as a coordination point for substrate.

The protein belongs to the tRNA pseudouridine synthase TruA family. As to quaternary structure, homodimer.

The catalysed reaction is uridine(38/39/40) in tRNA = pseudouridine(38/39/40) in tRNA. In terms of biological role, formation of pseudouridine at positions 38, 39 and 40 in the anticodon stem and loop of transfer RNAs. This Streptococcus sanguinis (strain SK36) protein is tRNA pseudouridine synthase A.